The chain runs to 101 residues: Small ribosomal subunit protein uS14 (101 aa).

The protein belongs to the universal ribosomal protein uS14 family. As to quaternary structure, part of the 30S ribosomal subunit. Contacts proteins S3 and S10.

Its function is as follows. Binds 16S rRNA, required for the assembly of 30S particles and may also be responsible for determining the conformation of the 16S rRNA at the A site. This is Small ribosomal subunit protein uS14 from Pseudomonas putida (strain GB-1).